Reading from the N-terminus, the 477-residue chain is Myc-associated zinc finger protein (477 aa).

2 disordered regions span residues 59–78 and 121–146; these read AQSP…APAA and TVDT…PAAE. The span at 130-141 shows a compositional bias: pro residues; it reads PPAPPPPPPPVS. C2H2-type zinc fingers lie at residues 190–212, 279–301, 307–329, and 337–360; these read YICA…EAIH, HACE…KLSH, YQCP…VRSH, and YNCS…RQVH. A Phosphoserine modification is found at serine 361. The segment at 366–388 adopts a C2H2-type 5 zinc-finger fold; sequence FKCEKCEAAFATKDRLRAHTVRH. The C2H2-type 6; atypical zinc-finger motif lies at 392–413; sequence VPCHVCGKMLSSAYISDHMKVH.

As to quaternary structure, interacts with BPTF. Forms a heterodimer with MAZ isoform 2; the interaction inhibits MAZ isoform 1-mediated transcription activation. In terms of assembly, forms a heterodimer with MAZ isoform 1; the interaction inhibits MAZ isoform 1-mediated transcription activation. Present in kidney, liver and brain. In the brain, highest levels are found in motor cortex and midfrontal cortex (at protein level). As to expression, expressed in the heart, brain, placenta, lung, liver, skeletal muscle and weakly expressed in the kidney. Expressed in the joint synovium.

Its subcellular location is the nucleus. Its function is as follows. Transcriptional regulator, potentially with dual roles in transcription initiation and termination. In terms of biological role, binds DNA and functions as a transcriptional activator. Binds to two G/A-rich sites, ME1a1 and ME1a2, within the MYC promoter having greater affinity for the former. Also binds to multiple G/C-rich sites within the promoter of the Sp1 family of transcription factors. Functionally, binds DNA and functions as a transcriptional activator. Inhibits MAZ isoform 1-mediated transcription. Binds DNA and functions as a transcriptional activator. The protein is Myc-associated zinc finger protein (MAZ) of Homo sapiens (Human).